Consider the following 149-residue polypeptide: 3-dehydroquinate dehydratase (149 aa).

Residue Tyr-26 is the Proton acceptor of the active site. Positions 77, 83, and 90 each coordinate substrate. His-103 serves as the catalytic Proton donor. Substrate-binding positions include 104 to 105 and Arg-114; that span reads LS.

Belongs to the type-II 3-dehydroquinase family. As to quaternary structure, homododecamer.

The catalysed reaction is 3-dehydroquinate = 3-dehydroshikimate + H2O. The protein operates within metabolic intermediate biosynthesis; chorismate biosynthesis; chorismate from D-erythrose 4-phosphate and phosphoenolpyruvate: step 3/7. In terms of biological role, catalyzes a trans-dehydration via an enolate intermediate. This is 3-dehydroquinate dehydratase from Vibrio parahaemolyticus serotype O3:K6 (strain RIMD 2210633).